The following is a 509-amino-acid chain: Autophagy-related protein 16 (509 aa).

WD repeat units lie at residues 223–262 (AHEG…LIKS), 265–304 (GSLG…VRHT), 307–347 (GHTD…CTNT), 349–388 (LFTS…LLSE), 391–430 (GHSS…ICGT), 437–478 (RLAS…SILK), and 480–509 (QTSP…CTWT).

Belongs to the WD repeat ATG16 family.

In terms of biological role, may play a role in autophagy. This Arabidopsis thaliana (Mouse-ear cress) protein is Autophagy-related protein 16.